Reading from the N-terminus, the 77-residue chain is Large ribosomal subunit protein uL29 (77 aa).

Belongs to the universal ribosomal protein uL29 family.

The sequence is that of Large ribosomal subunit protein uL29 from Mycolicibacterium gilvum (strain PYR-GCK) (Mycobacterium gilvum (strain PYR-GCK)).